The following is a 230-amino-acid chain: Large ribosomal subunit protein uL1 (230 aa).

It belongs to the universal ribosomal protein uL1 family. In terms of assembly, part of the 50S ribosomal subunit.

Functionally, binds directly to 23S rRNA. The L1 stalk is quite mobile in the ribosome, and is involved in E site tRNA release. In terms of biological role, protein L1 is also a translational repressor protein, it controls the translation of the L11 operon by binding to its mRNA. This is Large ribosomal subunit protein uL1 from Metamycoplasma arthritidis (strain 158L3-1) (Mycoplasma arthritidis).